We begin with the raw amino-acid sequence, 22 residues long: GMASKAGTIAGKIAKTAIKLAL.

Residue leucine 22 is modified to Leucine amide.

Expressed by the skin glands.

Its subcellular location is the secreted. Its function is as follows. Has antibacterial and antifungal activity. In Xenopus borealis (Kenyan clawed frog), this protein is Peptide PGLa-B1.